We begin with the raw amino-acid sequence, 567 residues long: Monodechloroaminopyrrolnitrin halogenase PrnC (567 aa).

The protein operates within antibiotic biosynthesis. Functionally, involved in the biosynthesis of the antifungal antibiotic pyrrolnitrin. Catalyzes the chlorination of monodechloroaminopyrrolnitrin (MDA) at the 3 position to form aminopyrrolnitrin (APRN). The protein is Monodechloroaminopyrrolnitrin halogenase PrnC (prnC) of Pseudomonas fluorescens.